Consider the following 83-residue polypeptide: DNA-directed RNA polymerase subunit Rpo5 (83 aa).

This sequence belongs to the archaeal Rpo5/eukaryotic RPB5 RNA polymerase subunit family. As to quaternary structure, part of the RNA polymerase complex.

It is found in the cytoplasm. It catalyses the reaction RNA(n) + a ribonucleoside 5'-triphosphate = RNA(n+1) + diphosphate. Its function is as follows. DNA-dependent RNA polymerase (RNAP) catalyzes the transcription of DNA into RNA using the four ribonucleoside triphosphates as substrates. The protein is DNA-directed RNA polymerase subunit Rpo5 of Metallosphaera sedula (strain ATCC 51363 / DSM 5348 / JCM 9185 / NBRC 15509 / TH2).